The chain runs to 327 residues: Aspartate--ammonia ligase (327 aa).

Belongs to the class-II aminoacyl-tRNA synthetase family. AsnA subfamily.

Its subcellular location is the cytoplasm. It catalyses the reaction L-aspartate + NH4(+) + ATP = L-asparagine + AMP + diphosphate + H(+). It participates in amino-acid biosynthesis; L-asparagine biosynthesis; L-asparagine from L-aspartate (ammonia route): step 1/1. In Bacillus cereus (strain ATCC 10987 / NRS 248), this protein is Aspartate--ammonia ligase.